We begin with the raw amino-acid sequence, 475 residues long: V-type ATP synthase beta chain (475 aa).

Belongs to the ATPase alpha/beta chains family.

Functionally, produces ATP from ADP in the presence of a proton gradient across the membrane. The V-type beta chain is a regulatory subunit. The protein is V-type ATP synthase beta chain of Anaeromyxobacter dehalogenans (strain 2CP-C).